A 239-amino-acid polypeptide reads, in one-letter code: Caffeoyl-CoA O-methyltransferase 1 (239 aa).

K13 lines the substrate pocket. S-adenosyl-L-methionine is bound by residues T55, E77, 79–80 (GV), S85, D103, and A132. Residue D155 coordinates substrate. Position 155 (D155) interacts with a divalent metal cation. D157 lines the S-adenosyl-L-methionine pocket. 2 residues coordinate a divalent metal cation: D181 and N182. Residue N186 participates in substrate binding.

It belongs to the class I-like SAM-binding methyltransferase superfamily. Cation-dependent O-methyltransferase family. CCoAMT subfamily. As to quaternary structure, monomer. It depends on Mg(2+) as a cofactor. Mostly expressed in the bottom and middle parts of the stems.

The catalysed reaction is (E)-caffeoyl-CoA + S-adenosyl-L-methionine = (E)-feruloyl-CoA + S-adenosyl-L-homocysteine + H(+). Its pathway is aromatic compound metabolism; phenylpropanoid biosynthesis. In terms of biological role, methylates caffeoyl-CoA to feruloyl-CoA and 5-hydroxyferuloyl-CoA to sinapoyl-CoA. Plays a role in the synthesis of feruloylated polysaccharides. Involved in the reinforcement of the plant cell wall. Also involved in the responding to wounding or pathogen challenge by the increased formation of cell wall-bound ferulic acid polymers. The sequence is that of Caffeoyl-CoA O-methyltransferase 1 (CCOAOMT1) from Nicotiana tabacum (Common tobacco).